The following is a 221-amino-acid chain: Sperm acrosome membrane-associated protein 3 (221 aa).

The Cytoplasmic segment spans residues Met1–Gln69. Residues Leu70–Ser90 traverse the membrane as a helical; Signal-anchor for type II membrane protein segment. Residues Ser91–Phe221 are Extracellular-facing. Residues Lys94–Phe221 form the C-type lysozyme domain. 4 disulfide bridges follow: Cys99-Cys219, Cys123-Cys207, Cys157-Cys172, and Cys168-Cys186.

Belongs to the glycosyl hydrolase 22 family. As to quaternary structure, interacts with ASTL. The processed form is expressed in sperm (at protein level). Expressed strongly in testis and epididymis and weakly in pancreas.

Its subcellular location is the cytoplasmic vesicle. The protein resides in the secretory vesicle. It localises to the acrosome membrane. The protein localises to the secreted. Sperm surface membrane protein that may be involved in sperm-egg plasma membrane adhesion and fusion during fertilization. It could be a potential receptor for the egg oligosaccharide residue N-acetylglucosamine, which is present in the extracellular matrix over the egg plasma membrane. The processed form has no detectable bacteriolytic activity in vitro. The protein is Sperm acrosome membrane-associated protein 3 (Spaca3) of Mus musculus (Mouse).